A 217-amino-acid polypeptide reads, in one-letter code: Probable transaldolase (217 aa).

Residue Lys-83 is the Schiff-base intermediate with substrate of the active site.

This sequence belongs to the transaldolase family. Type 3B subfamily.

It is found in the cytoplasm. It catalyses the reaction D-sedoheptulose 7-phosphate + D-glyceraldehyde 3-phosphate = D-erythrose 4-phosphate + beta-D-fructose 6-phosphate. The protein operates within carbohydrate degradation; pentose phosphate pathway; D-glyceraldehyde 3-phosphate and beta-D-fructose 6-phosphate from D-ribose 5-phosphate and D-xylulose 5-phosphate (non-oxidative stage): step 2/3. Its function is as follows. Transaldolase is important for the balance of metabolites in the pentose-phosphate pathway. The polypeptide is Probable transaldolase (Clostridium botulinum (strain Hall / ATCC 3502 / NCTC 13319 / Type A)).